The sequence spans 310 residues: Formyltetrahydrofolate deformylase (310 aa).

Residues 1–30 (MGKGSMTAHATPNEPDYPPPPGGPPPPADI) form a disordered region. Residues 15-28 (PDYPPPPGGPPPPA) show a composition bias toward pro residues. One can recognise an ACT domain in the interval 32-108 (RLLLRCHDRP…VADKFGIDYR (77 aa)). Residue Asp255 is part of the active site.

This sequence belongs to the PurU family.

It catalyses the reaction (6R)-10-formyltetrahydrofolate + H2O = (6S)-5,6,7,8-tetrahydrofolate + formate + H(+). The protein operates within purine metabolism; IMP biosynthesis via de novo pathway; formate from 10-formyl-5,6,7,8-tetrahydrofolate: step 1/1. Functionally, catalyzes the hydrolysis of 10-formyltetrahydrofolate (formyl-FH4) to formate and tetrahydrofolate (FH4). The chain is Formyltetrahydrofolate deformylase from Mycobacterium bovis (strain ATCC BAA-935 / AF2122/97).